We begin with the raw amino-acid sequence, 252 residues long: Imidazole glycerol phosphate synthase subunit HisF (252 aa).

Active-site residues include aspartate 11 and aspartate 130.

Belongs to the HisA/HisF family. In terms of assembly, heterodimer of HisH and HisF.

Its subcellular location is the cytoplasm. It catalyses the reaction 5-[(5-phospho-1-deoxy-D-ribulos-1-ylimino)methylamino]-1-(5-phospho-beta-D-ribosyl)imidazole-4-carboxamide + L-glutamine = D-erythro-1-(imidazol-4-yl)glycerol 3-phosphate + 5-amino-1-(5-phospho-beta-D-ribosyl)imidazole-4-carboxamide + L-glutamate + H(+). It participates in amino-acid biosynthesis; L-histidine biosynthesis; L-histidine from 5-phospho-alpha-D-ribose 1-diphosphate: step 5/9. In terms of biological role, IGPS catalyzes the conversion of PRFAR and glutamine to IGP, AICAR and glutamate. The HisF subunit catalyzes the cyclization activity that produces IGP and AICAR from PRFAR using the ammonia provided by the HisH subunit. This chain is Imidazole glycerol phosphate synthase subunit HisF, found in Moorella thermoacetica (strain ATCC 39073 / JCM 9320).